Consider the following 257-residue polypeptide: MEIHHQLLVSLLFLLLPLCSSQENTRSLAIDVNGPVETSPISEKLNPKLVYEIKVHGFMLWAAMGVLMPIGIISIRLMSIKDQPIITLRRLFFLHVTSQMVAVILVTIGAVMSVINFNNSFSNHHQQLGIGLYVIVWFQALLGFLRPPREEKARRKWFVGHWILGTSIAILGIINIYTGLHAYAKKTSKSANLWTILFTAQLSCIALVYLFQDKWSYIQSQATFNRNQSVDHNSNISTAETGHGYEVEESKPELEKC.

The first 21 residues, 1–21 (MEIHHQLLVSLLFLLLPLCSS), serve as a signal peptide directing secretion. Positions 22 to 219 (QENTRSLAID…LFQDKWSYIQ (198 aa)) constitute a Cytochrome b561 domain. 5 consecutive transmembrane segments (helical) span residues 55-75 (VHGF…IISI), 91-111 (LFFL…IGAV), 125-145 (HQQL…LGFL), 157-177 (WFVG…INIY), and 191-211 (ANLW…VYLF). Heme b-binding residues include histidine 56, histidine 95, histidine 125, and histidine 161. Positions 235–257 (NISTAETGHGYEVEESKPELEKC) are disordered. Residues 243–257 (HGYEVEESKPELEKC) show a composition bias toward basic and acidic residues.

Heme b serves as cofactor.

It localises to the membrane. The chain is Cytochrome b561 domain-containing protein At2g30890 from Arabidopsis thaliana (Mouse-ear cress).